The sequence spans 327 residues: DNA polymerase III subunit delta' (327 aa).

DNA polymerase III contains a core (composed of alpha, epsilon and theta chains) that associates with a tau subunit. This core dimerizes to form the POLIII' complex. PolIII' associates with the gamma complex (composed of gamma, delta, delta', psi and chi chains) and with the beta chain to form the complete DNA polymerase III complex.

The catalysed reaction is DNA(n) + a 2'-deoxyribonucleoside 5'-triphosphate = DNA(n+1) + diphosphate. In terms of biological role, DNA polymerase III is a complex, multichain enzyme responsible for most of the replicative synthesis in bacteria. This DNA polymerase also exhibits 3' to 5' exonuclease activity. In Haemophilus influenzae (strain ATCC 51907 / DSM 11121 / KW20 / Rd), this protein is DNA polymerase III subunit delta' (holB).